The chain runs to 403 residues: GTPase Obg (403 aa).

One can recognise an Obg domain in the interval 1 to 159 (MKFIDESLIR…RDLLLELMLL (159 aa)). An OBG-type G domain is found at 160-333 (ADVGMLGFPN…LCRDIMDFII (174 aa)). Residues 166–173 (GFPNAGKS), 191–195 (FTTLV), 213–216 (DIPG), 283–286 (NKID), and 314–316 (SAA) each bind GTP. 2 residues coordinate Mg(2+): Ser173 and Thr193. Residues 364–403 (YQFDDDEDWDDDWTEEDDDEDWDDDWSEEDDEGIEFIYKP) are disordered. Positions 365–397 (QFDDDEDWDDDWTEEDDDEDWDDDWSEEDDEGI) are enriched in acidic residues.

The protein belongs to the TRAFAC class OBG-HflX-like GTPase superfamily. OBG GTPase family. Monomer. Requires Mg(2+) as cofactor.

Its subcellular location is the cytoplasm. An essential GTPase which binds GTP, GDP and possibly (p)ppGpp with moderate affinity, with high nucleotide exchange rates and a fairly low GTP hydrolysis rate. Plays a role in control of the cell cycle, stress response, ribosome biogenesis and in those bacteria that undergo differentiation, in morphogenesis control. This Haemophilus influenzae (strain PittGG) protein is GTPase Obg.